A 263-amino-acid chain; its full sequence is HTH-type transcriptional regulator KdgR (263 aa).

An HTH iclR-type domain is found at 13-74 (VSSVLKVFGI…GESEKYSLTL (62 aa)). A DNA-binding region (H-T-H motif) is located at residues 34-53 (ITELSQRVMMSKSTVYRFLQ). One can recognise an IclR-ED domain in the interval 89 to 258 (LIRSADIQMR…ARKISAQMGY (170 aa)).

It is found in the cytoplasm. Functionally, transcriptional repressor that negatively regulates the expression of kdgT, kdgK and kdgA, which encode proteins involved in transport and catabolism of 2-keto-3-deoxygluconate (KDG). Also represses expression of eda, which encodes the Entner-Doudoroff aldolase, by binding to its P2 promoter region. The protein is HTH-type transcriptional regulator KdgR of Escherichia coli (strain K12).